A 296-amino-acid chain; its full sequence is Tyrosine recombinase XerC (296 aa).

In terms of domain architecture, Core-binding (CB) spans 1–84; the sequence is MDKIQETFLY…TLRTFYEFWM (84 aa). A Tyr recombinase domain is found at 105–286; that stretch reads YLPQFFYEEE…SNQQLRKVYL (182 aa). Active-site residues include arginine 145, lysine 169, histidine 238, arginine 241, and histidine 264. Tyrosine 273 acts as the O-(3'-phospho-DNA)-tyrosine intermediate in catalysis.

This sequence belongs to the 'phage' integrase family. XerC subfamily. As to quaternary structure, forms a cyclic heterotetrameric complex composed of two molecules of XerC and two molecules of XerD.

It is found in the cytoplasm. Site-specific tyrosine recombinase, which acts by catalyzing the cutting and rejoining of the recombining DNA molecules. The XerC-XerD complex is essential to convert dimers of the bacterial chromosome into monomers to permit their segregation at cell division. It also contributes to the segregational stability of plasmids. The protein is Tyrosine recombinase XerC of Staphylococcus epidermidis (strain ATCC 35984 / DSM 28319 / BCRC 17069 / CCUG 31568 / BM 3577 / RP62A).